Here is a 340-residue protein sequence, read N- to C-terminus: Glycerol-3-phosphate dehydrogenase [NAD(P)+] (340 aa).

The NADPH site is built by Ser13, Tyr14, and Lys108. Residues Lys108, Gly137, and Thr139 each coordinate sn-glycerol 3-phosphate. Ala141 is an NADPH binding site. The sn-glycerol 3-phosphate site is built by Lys193, Asp246, Ser256, Arg257, and Asn258. The active-site Proton acceptor is the Lys193. Arg257 serves as a coordination point for NADPH. Positions 281 and 283 each coordinate NADPH.

Belongs to the NAD-dependent glycerol-3-phosphate dehydrogenase family.

The protein localises to the cytoplasm. It carries out the reaction sn-glycerol 3-phosphate + NAD(+) = dihydroxyacetone phosphate + NADH + H(+). It catalyses the reaction sn-glycerol 3-phosphate + NADP(+) = dihydroxyacetone phosphate + NADPH + H(+). The protein operates within membrane lipid metabolism; glycerophospholipid metabolism. Its function is as follows. Catalyzes the reduction of the glycolytic intermediate dihydroxyacetone phosphate (DHAP) to sn-glycerol 3-phosphate (G3P), the key precursor for phospholipid synthesis. This Bartonella henselae (strain ATCC 49882 / DSM 28221 / CCUG 30454 / Houston 1) (Rochalimaea henselae) protein is Glycerol-3-phosphate dehydrogenase [NAD(P)+].